A 122-amino-acid polypeptide reads, in one-letter code: RxLR effector protein Avh52 (122 aa).

The signal sequence occupies residues 1–21 (MRLTSILVLVIAATFHTTGTA). The RxLR-dEER signature appears at 50–68 (RLLRRVEKDKVDYEQDEQR). The interval 69 to 86 (SFGALKDAVKKLNPVTAV) is TAP1-binding. The interval 87–98 (KKFFKQRARRKK) is nuclear localization signal (NLS).

It belongs to the RxLR effector family. Interacts with host acetyl transferase TAP1.

The protein resides in the secreted. It is found in the host nucleus. Its function is as follows. Effector that suppresses plant defense responses during the early stages of pathogen infection. Suppresses cell death induced by effectors and PAMPs in plant hosts. Interacts with host acetyltransferase TAP1 and causes TAP1 relocation into the nucleus where it acetylates histones H2A and H3 during early infection, thereby promoting susceptibility of host plant to P.sojae. This Phytophthora sojae (Soybean stem and root rot agent) protein is RxLR effector protein Avh52.